Reading from the N-terminus, the 225-residue chain is NAD(P)H-quinone oxidoreductase subunit K, chloroplastic (225 aa).

The [4Fe-4S] cluster site is built by cysteine 43, cysteine 44, cysteine 108, and cysteine 139.

The protein belongs to the complex I 20 kDa subunit family. NDH is composed of at least 16 different subunits, 5 of which are encoded in the nucleus. [4Fe-4S] cluster is required as a cofactor.

It is found in the plastid. The protein resides in the chloroplast thylakoid membrane. It carries out the reaction a plastoquinone + NADH + (n+1) H(+)(in) = a plastoquinol + NAD(+) + n H(+)(out). It catalyses the reaction a plastoquinone + NADPH + (n+1) H(+)(in) = a plastoquinol + NADP(+) + n H(+)(out). Functionally, NDH shuttles electrons from NAD(P)H:plastoquinone, via FMN and iron-sulfur (Fe-S) centers, to quinones in the photosynthetic chain and possibly in a chloroplast respiratory chain. The immediate electron acceptor for the enzyme in this species is believed to be plastoquinone. Couples the redox reaction to proton translocation, and thus conserves the redox energy in a proton gradient. The polypeptide is NAD(P)H-quinone oxidoreductase subunit K, chloroplastic (Oenothera argillicola (Appalachian evening primrose)).